Consider the following 320-residue polypeptide: Malate dehydrogenase (320 aa).

Residues 10 to 15 and Asp-34 each bind NAD(+); that span reads GAGQIG. Arg-83 and Arg-89 together coordinate substrate. NAD(+)-binding positions include Asn-96 and 119 to 121; that span reads ITN. 2 residues coordinate substrate: Asn-121 and Arg-152. His-176 functions as the Proton acceptor in the catalytic mechanism.

It belongs to the LDH/MDH superfamily. MDH type 3 family.

The enzyme catalyses (S)-malate + NAD(+) = oxaloacetate + NADH + H(+). Its function is as follows. Catalyzes the reversible oxidation of malate to oxaloacetate. The polypeptide is Malate dehydrogenase (Cereibacter sphaeroides (strain ATCC 17029 / ATH 2.4.9) (Rhodobacter sphaeroides)).